Consider the following 301-residue polypeptide: Probable 2-oxoglutarate-dependent dioxygenase AOP1 (301 aa).

The region spanning 158–262 (TYYLTRLMKY…RYSTGLFSIP (105 aa)) is the Fe2OG dioxygenase domain. Positions 186, 188, and 243 each coordinate Fe cation. Residue arginine 253 participates in 2-oxoglutarate binding.

The protein belongs to the iron/ascorbate-dependent oxidoreductase family. Requires Fe(2+) as cofactor.

Functionally, probable 2-oxoglutarate-dependent dioxygenase that may be involved in glucosinolates biosynthesis. May play a role in the production of aliphatic glucosinolates. The chain is Probable 2-oxoglutarate-dependent dioxygenase AOP1 (AOP1) from Arabidopsis thaliana (Mouse-ear cress).